A 59-amino-acid chain; its full sequence is U-actitoxin-Aer2a (59 aa).

Contains 5 disulfide bonds.

It is found in the secreted. The protein localises to the nematocyst. The polypeptide is U-actitoxin-Aer2a (Anemonia erythraea (Sea anemone)).